We begin with the raw amino-acid sequence, 211 residues long: ATP-dependent Clp protease proteolytic subunit (211 aa).

The active-site Nucleophile is Ser-114. Residue His-139 is part of the active site.

This sequence belongs to the peptidase S14 family. As to quaternary structure, fourteen ClpP subunits assemble into 2 heptameric rings which stack back to back to give a disk-like structure with a central cavity, resembling the structure of eukaryotic proteasomes.

Its subcellular location is the cytoplasm. It carries out the reaction Hydrolysis of proteins to small peptides in the presence of ATP and magnesium. alpha-casein is the usual test substrate. In the absence of ATP, only oligopeptides shorter than five residues are hydrolyzed (such as succinyl-Leu-Tyr-|-NHMec, and Leu-Tyr-Leu-|-Tyr-Trp, in which cleavage of the -Tyr-|-Leu- and -Tyr-|-Trp bonds also occurs).. Its function is as follows. Cleaves peptides in various proteins in a process that requires ATP hydrolysis. Has a chymotrypsin-like activity. Plays a major role in the degradation of misfolded proteins. In Pseudomonas fluorescens (strain ATCC BAA-477 / NRRL B-23932 / Pf-5), this protein is ATP-dependent Clp protease proteolytic subunit.